The primary structure comprises 49 residues: Large ribosomal subunit protein bL33A (49 aa).

It belongs to the bacterial ribosomal protein bL33 family.

This Geobacillus kaustophilus (strain HTA426) protein is Large ribosomal subunit protein bL33A.